The primary structure comprises 208 residues: Large ribosomal subunit protein uL3 (208 aa).

The residue at position 149 (Q149) is an N5-methylglutamine.

It belongs to the universal ribosomal protein uL3 family. In terms of assembly, part of the 50S ribosomal subunit. Forms a cluster with proteins L14 and L19. Methylated by PrmB.

Functionally, one of the primary rRNA binding proteins, it binds directly near the 3'-end of the 23S rRNA, where it nucleates assembly of the 50S subunit. The sequence is that of Large ribosomal subunit protein uL3 from Actinobacillus pleuropneumoniae serotype 5b (strain L20).